We begin with the raw amino-acid sequence, 61 residues long: Short neurotoxin 1 (61 aa).

4 disulfides stabilise this stretch: Cys-3/Cys-23, Cys-17/Cys-40, Cys-42/Cys-53, and Cys-54/Cys-59.

Belongs to the three-finger toxin family. Short-chain subfamily. Type I alpha-neurotoxin sub-subfamily. As to expression, expressed by the venom gland.

It localises to the secreted. In terms of biological role, binds to muscle nicotinic acetylcholine receptor (nAChR) and inhibit acetylcholine from binding to the receptor, thereby impairing neuromuscular transmission. The polypeptide is Short neurotoxin 1 (Naja philippinensis (Philippine cobra)).